Reading from the N-terminus, the 200-residue chain is Large ribosomal subunit protein uL4 (200 aa).

Residues 38 to 72 (GRQGTKQQKTRSDVAGGGKRPWRQKGTGRARAGTT) are disordered.

Belongs to the universal ribosomal protein uL4 family. Part of the 50S ribosomal subunit.

Its function is as follows. One of the primary rRNA binding proteins, this protein initially binds near the 5'-end of the 23S rRNA. It is important during the early stages of 50S assembly. It makes multiple contacts with different domains of the 23S rRNA in the assembled 50S subunit and ribosome. In terms of biological role, forms part of the polypeptide exit tunnel. The sequence is that of Large ribosomal subunit protein uL4 from Pseudomonas entomophila (strain L48).